Here is a 198-residue protein sequence, read N- to C-terminus: Ribonuclease HII (198 aa).

The RNase H type-2 domain occupies 10-198 (HLVAGVDEVG…PVKRALELAS (189 aa)). A divalent metal cation is bound by residues D16, E17, and D108.

This sequence belongs to the RNase HII family. Mn(2+) serves as cofactor. Mg(2+) is required as a cofactor.

It localises to the cytoplasm. The catalysed reaction is Endonucleolytic cleavage to 5'-phosphomonoester.. In terms of biological role, endonuclease that specifically degrades the RNA of RNA-DNA hybrids. The chain is Ribonuclease HII from Salmonella arizonae (strain ATCC BAA-731 / CDC346-86 / RSK2980).